Consider the following 66-residue polypeptide: FMRFamide-like neuropeptides 24 (66 aa).

Residues 1-22 form the signal peptide; it reads MSRTSIILVLAIFVAIAAIAQC. Positions 23–48 are excised as a propeptide; sequence RNIQYDVDEISPEAAFRYAQWGEIPH. Phe-61 bears the Phenylalanine amide mark. A propeptide spanning residues 65–66 is cleaved from the precursor; the sequence is SV.

This sequence belongs to the FARP (FMRFamide related peptide) family.

The protein resides in the secreted. Functionally, FMRFamides and FMRFamide-like peptides are neuropeptides. The protein is FMRFamide-like neuropeptides 24 of Caenorhabditis briggsae.